Consider the following 106-residue polypeptide: uncharacterized protein (106 aa).

This is an uncharacterized protein from Saccharomyces cerevisiae (strain ATCC 204508 / S288c) (Baker's yeast).